The sequence spans 367 residues: MTSTQRTLMVMAGGTGGHVFPGLAVAHRMQAQGWRVVWLGNPAGMEATLVPRHGIPMEYVRFGGLRGKGLATKFALPFNLLRACAQSLRALRRVKPDVVLGMGGYITFPAGLVTVLTGRPLVLHEQNSIAGLTNKVLAKLAKRVLVAFPGALPNAEWTGNPIRTELARTEPPQARYAARSGKLRLLVVGGSLGAAALNEVVPRALALLAPDERPQVVHQAGAKHIDTLKENYEAAGLSCGSDVALVPFIDDMASAYANADLVICRSGAMTVAEIAAVGVAALFVPFPHAVDDHQTTNAEFLAEQGAAVLVQQRDLSAELLADWLRGQSRDSLAAMAERSRSLAKPDATDEVARVCAAVAGANLEGKQ.

UDP-N-acetyl-alpha-D-glucosamine is bound by residues 15–17 (TGG), Asn127, Arg163, Ser191, Ile249, and Gln294.

This sequence belongs to the glycosyltransferase 28 family. MurG subfamily.

Its subcellular location is the cell inner membrane. It carries out the reaction di-trans,octa-cis-undecaprenyl diphospho-N-acetyl-alpha-D-muramoyl-L-alanyl-D-glutamyl-meso-2,6-diaminopimeloyl-D-alanyl-D-alanine + UDP-N-acetyl-alpha-D-glucosamine = di-trans,octa-cis-undecaprenyl diphospho-[N-acetyl-alpha-D-glucosaminyl-(1-&gt;4)]-N-acetyl-alpha-D-muramoyl-L-alanyl-D-glutamyl-meso-2,6-diaminopimeloyl-D-alanyl-D-alanine + UDP + H(+). It functions in the pathway cell wall biogenesis; peptidoglycan biosynthesis. Its function is as follows. Cell wall formation. Catalyzes the transfer of a GlcNAc subunit on undecaprenyl-pyrophosphoryl-MurNAc-pentapeptide (lipid intermediate I) to form undecaprenyl-pyrophosphoryl-MurNAc-(pentapeptide)GlcNAc (lipid intermediate II). The sequence is that of UDP-N-acetylglucosamine--N-acetylmuramyl-(pentapeptide) pyrophosphoryl-undecaprenol N-acetylglucosamine transferase from Burkholderia mallei (strain NCTC 10247).